The following is a 131-amino-acid chain: Large ribosomal subunit protein bL19 (131 aa).

This sequence belongs to the bacterial ribosomal protein bL19 family.

Its function is as follows. This protein is located at the 30S-50S ribosomal subunit interface and may play a role in the structure and function of the aminoacyl-tRNA binding site. The sequence is that of Large ribosomal subunit protein bL19 from Afipia carboxidovorans (strain ATCC 49405 / DSM 1227 / KCTC 32145 / OM5) (Oligotropha carboxidovorans).